Consider the following 394-residue polypeptide: Elongation factor Tu (394 aa).

The tr-type G domain maps to 10 to 204; sequence KPHLNVGTIG…TLDTYIEDPV (195 aa). Residues 19 to 26 form a G1 region; that stretch reads GHVDHGKT. GTP is bound at residue 19-26; sequence GHVDHGKT. Threonine 26 contributes to the Mg(2+) binding site. Residues 60 to 64 form a G2 region; that stretch reads GITIK. A G3 region spans residues 81–84; the sequence is DCPG. Residues 81–85 and 136–139 contribute to the GTP site; these read DCPGH and NKCD. Residues 136-139 form a G4 region; that stretch reads NKCD. Residues 174–176 form a G5 region; the sequence is SAL.

It belongs to the TRAFAC class translation factor GTPase superfamily. Classic translation factor GTPase family. EF-Tu/EF-1A subfamily. As to quaternary structure, monomer.

It is found in the cytoplasm. It catalyses the reaction GTP + H2O = GDP + phosphate + H(+). Functionally, GTP hydrolase that promotes the GTP-dependent binding of aminoacyl-tRNA to the A-site of ribosomes during protein biosynthesis. The sequence is that of Elongation factor Tu from Onion yellows phytoplasma (strain OY-M).